The chain runs to 382 residues: uncharacterized protein (382 aa).

This is an uncharacterized protein from Bacillus subtilis (strain 168).